We begin with the raw amino-acid sequence, 187 residues long: MATTSDLRTNMIIRYNGQLHRVVEFYHHAPGNWRAMVIMKLKNLETGKTIEERVRAGSEIEIVRVEKRPMQFLYRDGDVYHFMDTETFEQIEVPEEMIGEPAKFLKENEMADILFYDDNKILGVEPPLFVTLQVTEASVAVRGDTATNVNKQVTLETGAVISVPAFVNQGDYVRVDTRTGEYIERIK.

Belongs to the elongation factor P family.

It is found in the cytoplasm. It functions in the pathway protein biosynthesis; polypeptide chain elongation. Its function is as follows. Involved in peptide bond synthesis. Stimulates efficient translation and peptide-bond synthesis on native or reconstituted 70S ribosomes in vitro. Probably functions indirectly by altering the affinity of the ribosome for aminoacyl-tRNA, thus increasing their reactivity as acceptors for peptidyl transferase. The chain is Elongation factor P from Roseiflexus sp. (strain RS-1).